The following is a 182-amino-acid chain: uncharacterized protein (182 aa).

Helical transmembrane passes span 76-96 (LLLA…LALA) and 114-130 (LDLL…LIGA).

It localises to the membrane. This is an uncharacterized protein from Saccharomyces cerevisiae (strain ATCC 204508 / S288c) (Baker's yeast).